A 900-amino-acid polypeptide reads, in one-letter code: Translation initiation factor IF-2 (900 aa).

2 disordered regions span residues 30-77 (GEFV…SLDK) and 89-291 (NGKA…YDSM). Residues 89–112 (NGKATAAPAKAADSGGAAIVSPTT) show a composition bias toward low complexity. The segment covering 113–129 (PAAPEPPTAVPPSPQAP) has biased composition (pro residues). A compositionally biased stretch (low complexity) spans 175–187 (PGTARPGVPRPGA). Residues 215 to 271 (GRPGAPGAGRSDAGGGNYRGGGVGAAPGTGFRGRPGGGGGGRPGQRGGAAGAFGRPG) show a composition bias toward gly residues. The segment covering 275–284 (RRGRKSKRQK) has biased composition (basic residues). In terms of domain architecture, tr-type G spans 396-567 (VRPPVVTVMG…AVLLTADAAL (172 aa)). Residues 405 to 412 (GHVDHGKT) are G1. Residue 405 to 412 (GHVDHGKT) coordinates GTP. The tract at residues 430 to 434 (GITQH) is G2. The segment at 455–458 (DTPG) is G3. GTP contacts are provided by residues 455 to 459 (DTPGH) and 509 to 512 (NKID). The tract at residues 509–512 (NKID) is G4. The tract at residues 545–547 (SAK) is G5.

It belongs to the TRAFAC class translation factor GTPase superfamily. Classic translation factor GTPase family. IF-2 subfamily.

The protein resides in the cytoplasm. Functionally, one of the essential components for the initiation of protein synthesis. Protects formylmethionyl-tRNA from spontaneous hydrolysis and promotes its binding to the 30S ribosomal subunits. Also involved in the hydrolysis of GTP during the formation of the 70S ribosomal complex. This chain is Translation initiation factor IF-2, found in Mycobacterium bovis (strain BCG / Pasteur 1173P2).